Consider the following 356-residue polypeptide: 4-hydroxybenzoate polyprenyltransferase, mitochondrial (356 aa).

Residues 1–44 constitute a mitochondrion transit peptide; sequence MITRSIGIARRSNSINCIVGSNTSTSYSLDESTKRWISTSTKQP. 6 consecutive transmembrane segments (helical) span residues 71–91, 93–113, 150–170, 195–215, 269–289, and 332–352; these read VDKP…IAMA, PAGQ…AFLM, AIGL…QLNW, WPQF…WCAL, WLSA…IASD, and IILF…QILI.

The protein belongs to the UbiA prenyltransferase family. Mg(2+) serves as cofactor.

It localises to the mitochondrion inner membrane. The catalysed reaction is an all-trans-polyprenyl diphosphate + 4-hydroxybenzoate = a 4-hydroxy-3-(all-trans-polyprenyl)benzoate + diphosphate. It functions in the pathway cofactor biosynthesis; ubiquinone biosynthesis. Functionally, catalyzes the prenylation of para-hydroxybenzoate (PHB) with an all-trans polyprenyl group. Mediates the second step in the final reaction sequence of coenzyme Q (CoQ) biosynthesis, which is the condensation of the polyisoprenoid side chain with PHB, generating the first membrane-bound Q intermediate. The sequence is that of 4-hydroxybenzoate polyprenyltransferase, mitochondrial (coq-2) from Caenorhabditis elegans.